The chain runs to 323 residues: D-alanine--D-alanine ligase (323 aa).

Residues 121–317 (RIWFLTNNIN…FTNLIEEIIK (197 aa)) enclose the ATP-grasp domain. 147–199 (PMKRPYVIKPLAQGSSIGVEVIFAEDDFNFADYDFPYGDQVIIEQYIKGQGRE) provides a ligand contact to ATP. The Mg(2+) site is built by Glu-270, Glu-284, and Asn-286.

Belongs to the D-alanine--D-alanine ligase family. The cofactor is Mg(2+). Requires Mn(2+) as cofactor.

The protein localises to the cytoplasm. It carries out the reaction 2 D-alanine + ATP = D-alanyl-D-alanine + ADP + phosphate + H(+). It functions in the pathway cell wall biogenesis; peptidoglycan biosynthesis. Functionally, cell wall formation. This chain is D-alanine--D-alanine ligase, found in Rickettsia peacockii (strain Rustic).